Reading from the N-terminus, the 635-residue chain is MSEHGADLRFDSPEKEIKHWKSKVADMQDALRETESSLQDFVESSKELEQEMEKELSASNKTISDLKRRNEQLSGDLEDWKSKYSRALSEHNATLTTLQKELGQLRESVDIYKAKLRDTELTNDELENAERMVASSLADMEGKYNKTIEKTALLEEELIEKTRLDEENQRLKDELREMTEEMTILRDLVTRSRAISRADTMASSTYDDSTAPRSEQSFDSSPIKPSSAARATERPSSRQALSSPVTNRVPISRRLGAMGHNRRLSRDVRAAEAPSLAAVLDDSPTATTTSAAPTRSSTLSRRDPLAATPYHHGASTSHGLTSSPSARAQLRASVRAAARIGGAVSVSSAPRSTNLSANGGAAGSKRMMAEMISKMKALESRINSAKDLSRVVGPGDESAIPRPSSRMATIGSPSANGHNSIHMPTSTPRAPRASMDGNRTIGSSIPVPSRVRRPSSRMSERGTPPMPSLGLPRAQTPSSLHARGSSRADGPSPLPLHEFMDHDPASTLPHAARYAAAQASVAKRRTSMSGSGMSHSASHGSLAKVRSGSTLPRSTTPSTVAAPRVTQSSMTYYGAEASMSKRTPLSTRLASSHRNASSARGSINGPPSSWKTSAMPAQTLSRSRSSSLGSETETF.

Residues 14-192 (EKEIKHWKSK…TILRDLVTRS (179 aa)) adopt a coiled-coil conformation. Disordered regions lie at residues 35–63 (ESSLQDFVESSKELEQEMEKELSASNKTI), 200–267 (TMAS…LSRD), 279–328 (VLDD…SARA), 389–504 (SRVV…DHDP), and 516–635 (AAQA…TETF). Positions 43 to 56 (ESSKELEQEMEKEL) are enriched in basic and acidic residues. Polar residues-rich tracts occupy residues 201-224 (MASSTYDDSTAPRSEQSFDSSPIK) and 237-246 (SRQALSSPVT). The span at 280–299 (LDDSPTATTTSAAPTRSSTL) shows a compositional bias: low complexity. 2 stretches are compositionally biased toward polar residues: residues 314–326 (ASTSHGLTSSPSA) and 411–428 (GSPSANGHNSIHMPTSTP). Positions 516 to 541 (AAQASVAKRRTSMSGSGMSHSASHGS) are enriched in low complexity. 2 stretches are compositionally biased toward polar residues: residues 547–571 (SGSTLPRSTTPSTVAAPRVTQSSMT) and 580–619 (SKRTPLSTRLASSHRNASSARGSINGPPSSWKTSAMPAQT). The span at 620-635 (LSRSRSSSLGSETETF) shows a compositional bias: low complexity.

This sequence belongs to the nudE family. In terms of assembly, self-associates. Interacts with PAC1.

The protein localises to the cytoplasm. It is found in the cytoskeleton. Functionally, required for nuclear migration. In Mycosarcoma maydis (Corn smut fungus), this protein is Nuclear distribution protein nudE homolog 1 (NDE1).